The sequence spans 454 residues: MISRSALSRGSQLALRRPAAAKTAQRGFAAAAASPAASYEPTTIAGVKVASRDDSGPTTRLAVVAKAGTRYEPLPGLTVGLEEFAFKNTNKRTALRITRESELLGGQLQAYHTREAVVLQASFLREDLPYFTELLAEVISETKYTTHEFHELVENCIHEKQAKLDSAAIALDAAHNVAFHSGLGSPLYPTVDTPTSSYLNENSVAAFANLAYNKANIAVVADGASQAGLEKWVEPFFKGVPATSSGNLNTAASKYFGGEQRVAKNGKNAIVIAFPGASLGVPHPETSVLVGLLGGVSNIKWSPGFSLLAKATAANPGAEAFAHNYAYSDAGLLAIQITGKGAAVGKVAVEAVKGLKAIAAGGVSKEDLTKAIAKAKFNLLSASEVSGTGLVHAGANLLAGGKPIQVAETLKALEGVTAEKLQAAAKKLLEGKASVSAVGDLHVLPYAEDLGLKV.

A mitochondrion-targeting transit peptide spans M1–P35.

The protein belongs to the peptidase M16 family. UQCRC2/QCR2 subfamily. As to quaternary structure, component of the ubiquinol-cytochrome c oxidoreductase (cytochrome b-c1 complex, complex III, CIII), a multisubunit enzyme composed of 10 subunits. The complex is composed of 3 respiratory subunits cytochrome b (cob), cytochrome c1 (cyt-1) and Rieske protein (fes-1), 2 core protein subunits pep and ucr-1, and 5 low-molecular weight protein subunits qcr6, qcr7, qcr8, qcr9 and probably NCU16844/qcr10. The complex exists as an obligatory dimer and forms supercomplexes (SCs) in the inner mitochondrial membrane with NADH-ubiquinone oxidoreductase (complex I, CI) and cytochrome c oxidase (complex IV, CIV), resulting in different assemblies (supercomplexes SCI(1)III(2), SCIII(2)IV(1) and SCIII(2)IV(2) as well as higher order I(x)III(y)IV(z) megacomplexes).

It is found in the mitochondrion inner membrane. Component of the ubiquinol-cytochrome c oxidoreductase, a multisubunit transmembrane complex that is part of the mitochondrial electron transport chain which drives oxidative phosphorylation. The respiratory chain contains 3 multisubunit complexes succinate dehydrogenase (complex II, CII), ubiquinol-cytochrome c oxidoreductase (cytochrome b-c1 complex, complex III, CIII) and cytochrome c oxidase (complex IV, CIV), that cooperate to transfer electrons derived from NADH and succinate to molecular oxygen, creating an electrochemical gradient over the inner membrane that drives transmembrane transport and the ATP synthase. The cytochrome b-c1 complex catalyzes electron transfer from ubiquinol to cytochrome c, linking this redox reaction to translocation of protons across the mitochondrial inner membrane, with protons being carried across the membrane as hydrogens on the quinol. In the process called Q cycle, 2 protons are consumed from the matrix, 4 protons are released into the intermembrane space and 2 electrons are passed to cytochrome c. This Neurospora crassa (strain ATCC 24698 / 74-OR23-1A / CBS 708.71 / DSM 1257 / FGSC 987) protein is Cytochrome b-c1 complex subunit 2, mitochondrial (ucr-1).